We begin with the raw amino-acid sequence, 317 residues long: Tricarboxylate transport protein B, mitochondrial (317 aa).

Positions 1–20 (MSGSPKFVSPFHRPHCLSAA) are cleaved as a propeptide — removed in mature form. 3 Solcar repeats span residues 29–117 (THPG…LSNQ), 128–214 (TRGL…LRNW), and 224–309 (INPV…VVKV). The next 4 membrane-spanning stretches (helical) occupy residues 35 to 55 (ILAG…TEYV), 130 to 150 (GLIC…CPME), 223 to 243 (SINP…SVFG), and 294 to 314 (MDVA…NKVW).

It belongs to the mitochondrial carrier (TC 2.A.29) family. In terms of processing, possesses a short cleavable presequence, which, however, is found to be dispensable both for targeting to mitochondria and insertion into the inner membrane. However, the presequence is required to keep SLC25A1 in a soluble state and thus in an import-competent state. Mature SLC25A1 lacking the presequence is prone to aggregation.

The protein localises to the mitochondrion inner membrane. The enzyme catalyses (S)-malate(in) + citrate(out) = (S)-malate(out) + citrate(in). It catalyses the reaction D-threo-isocitrate(in) + citrate(out) = D-threo-isocitrate(out) + citrate(in). It carries out the reaction citrate(out) + succinate(in) = citrate(in) + succinate(out). The catalysed reaction is cis-aconitate(in) + citrate(out) = cis-aconitate(out) + citrate(in). The enzyme catalyses trans-aconitate(in) + citrate(out) = trans-aconitate(out) + citrate(in). It catalyses the reaction phosphoenolpyruvate(in) + citrate(out) = phosphoenolpyruvate(out) + citrate(in). It carries out the reaction maleate(in) + citrate(out) = maleate(out) + citrate(in). Mitochondrial electroneutral antiporter that exports citrate from the mitochondria into the cytosol in exchange for malate. Also able to mediate the exchange of citrate for isocitrate, phosphoenolpyruvate, cis-aconitate and to a lesser extent trans-aconitate, maleate and succinate. In the cytoplasm, citrate plays important roles in fatty acid and sterol synthesis, regulation of glycolysis, protein acetylation, and other physiopathological processes. In Danio rerio (Zebrafish), this protein is Tricarboxylate transport protein B, mitochondrial.